The sequence spans 2549 residues: Serine/threonine-protein kinase mTOR (2549 aa).

Met1 is modified (N-acetylmethionine). Residues 1-651 form an interaction with NBN region; it reads MLGTGPAVAT…HVVSQTAVQV (651 aa). HEAT repeat units lie at residues 16–53, 55–99, 100–137, 138–179, 180–220, 222–276, 277–313, 314–364, 365–409, 410–445, 446–494, 495–529, 530–563, 564–596, 597–636, 637–683, 686–724, 727–766, 769–811, 814–853, 857–893, 894–942, 943–988, 989–1027, 1029–1068, 1069–1105, 1106–1144, 1145–1188, 1189–1225, 1226–1273, 1274–1311, and 1312–1345; these read SSNV…MELR, MSQE…VEGG, NSTR…AMAG, DTFT…AISV, PTFF…LILT, QREP…RISS, MEGE…PRHI, TPFT…CCRD, LMEE…AFTD, TQYL…VAVR, SEFK…RAMG, PGIQ…RQIP, QLKK…GLAH, QLAS…EFEG, HSLT…SIHL, ISGH…DERF, HLAQ…MNPA, MPFL…NAPR, RPYM…VSGL, RKWV…STGY, PYRK…LLGA, LDPY…GNLP, LDEF…KCVQ, FLPQ…KSHI, PYMD…GEFK, LYLP…LFGA, NLDD…RLTE, SLDF…GKKY, QIFI…LADE, EEDP…GAAR, RVSK…QAYN, and PMAR…ELAL. The residue at position 567 (Ser567) is a Phosphoserine. Thr1162 carries the phosphothreonine modification. Lys1218 is modified (N6-acetyllysine). Ser1261 is modified (phosphoserine). 16 TPR repeats span residues 1346-1382, 1383-1408, 1409-1442, 1443-1473, 1474-1507, 1508-1541, 1542-1574, 1575-1614, 1615-1649, 1650-1693, 1694-1731, 1732-1786, 1787-1846, 1898-1930, 1931-1970, and 1971-2005; these read TSQD…GIVL, LGER…QKGP, TPAI…HFGE, LEIQ…NKED, PELM…VNDE, TQAK…RDTH, DGAF…LDAE, LTAM…RREI, IRQI…PHED, MRTW…PTAH, PQVT…AQHA, IATE…DRSW, YKAW…STEG, NNLQ…VKAI, QIDT…YHPQ, and ALIY…SNTL. Residues 1382–1982 form the FAT domain; it reads LLGERAAKCR…IYPLTVASKS (601 aa). 1D-myo-inositol hexakisphosphate is bound by residues Lys1662, Lys1702, and Arg1749. Over residues 1825–1860 the composition is skewed to low complexity; the sequence is ITNATTAATTAASAAAATSTEGSNSESEAESNENSP. The interval 1825–1867 is disordered; it reads ITNATTAATTAASAAAATSTEGSNSESEAESNENSPTPSPLQK. The interval 2012-2144 is sufficient for interaction with the FKBP1A/rapamycin complex; it reads VSEELIRVAI…DLELAVPGTY (133 aa). Lys2066 participates in a covalent cross-link: Glycyl lysine isopeptide (Lys-Gly) (interchain with G-Cter in ubiquitin). In terms of domain architecture, PI3K/PI4K catalytic spans 2156–2469; the sequence is IAPSLQVITS…GVELGEPAHK (314 aa). Ser2159 is modified (phosphoserine; by TBK1). Positions 2162–2168 are G-loop; the sequence is VITSKQR. Thr2164 carries the phosphothreonine modification. Residues Ser2165 and Gln2167 each contribute to the ATP site. At Thr2173 the chain carries Phosphothreonine; by PKB/AKT1. Leu2185, Lys2187, Glu2190, Tyr2225, Gly2238, Trp2239, Val2240, and Thr2245 together coordinate ATP. Residues 2258–2296 are interaction with MLST8; sequence KILLNIEHRIMLRMAPDYDHLTLMQKVEVFEHAVNNTAG. A catalytic loop region spans residues 2335 to 2343; sequence GLGDRHPSN. Position 2343 (Asn2343) interacts with Mg(2+). ATP-binding residues include Met2345 and Ile2356. The segment at 2355-2380 is activation loop; that stretch reads HIDFGDCFEVAMTREKFPEKIPFRLT. Asp2357 provides a ligand contact to Mg(2+). Thr2446 bears the Phosphothreonine; by RPS6KB1 mark. The residue at position 2448 (Ser2448) is a Phosphoserine; by RPS6KB1. A phosphoserine mark is found at Ser2478 and Ser2481. In terms of domain architecture, FATC spans 2517–2549; the sequence is DTLDVPTQVELLIKQATSHENLCQCYIGWCPFW.

This sequence belongs to the PI3/PI4-kinase family. In terms of assembly, part of the mechanistic target of rapamycin complex 1 (mTORC1) which contains MTOR, MLST8 and RPTOR. The mTORC1 complex is a 1 Md obligate dimer of two stoichiometric heterotetramers with overall dimensions of 290 A x 210 A x 135 A. It has a rhomboid shape and a central cavity, the dimeric interfaces are formed by interlocking interactions between the two MTOR and the two RPTOR subunits. The MLST8 subunit forms distal foot-like protuberances, and contacts only one MTOR within the complex, while the small AKT1S1/PRAS40 localizes to the midsection of the central core, in close proximity to RPTOR. mTORC1 associates with AKT1S1/PRAS40, which inhibits its activity by blocking MTOR substrate-recruitment site. Component of the mechanistic target of rapamycin complex 2 (mTORC2), consisting in two heterotretramers composed of MTOR, MLST8, RICTOR and MAPKAP1/SIN1. Interacts with PLPP7 and PML. Interacts with PRR5 and RICTOR; the interaction is direct within the mTORC2 complex and interaction with RICTOR is enhanced by deubiquitination of RICTOR by USP9X. mTORC1 and mTORC2 associate with DEPTOR, which regulates their activity. Interacts with WAC; WAC positively regulates MTOR activity by promoting the assembly of the TTT complex composed of TELO2, TTI1 and TTI2 and the RUVBL complex composed of RUVBL1 and RUVBL2 into the TTT-RUVBL complex which leads to the dimerization of the mTORC1 complex and its subsequent activation. Interacts with UBQLN1. Interacts with TTI1 and TELO2. Interacts with CLIP1; phosphorylates and regulates CLIP1. Interacts with NBN. Interacts with HTR6. Interacts with BRAT1. Interacts with MEAK7 (via C-terminal domain); the interaction increases upon nutrient stimulation. Interacts with TM4SF5; the interaction is positively regulated by arginine and is negatively regulated by leucine. Interacts with GPR137B. Interacts with NCKAP1L. Interacts with TPCN1 and TPCN2; the interaction is required for TPCN1 and TPCN2 sensitivity to ATP. Interacts with ATP6V1A and with CRYAB, forming a ternary complex. Interacts with SLC38A7; this interaction mediates the recruitment of mTORC1 to the lysosome and its subsequent activation. Interacts with TSPAN8. Post-translationally, autophosphorylates when part of mTORC1 or mTORC2. Phosphorylation at Ser-1261, Ser-2159 and Thr-2164 promotes autophosphorylation. Phosphorylated at Ser-2448 by RPS6KB1. Phosphorylation in the kinase domain modulates the interactions of MTOR with RPTOR and AKT1S1/PRAS40 and leads to increased intrinsic mTORC1 kinase activity. Phosphorylation at Ser-2159 by TBK1 in response to growth factors and pathogen recognition receptors promotes mTORC1 activity. Phosphorylation at Ser-2159 by TBK1 in response to EGF growth factor promotes mTORC2 activity, leading to AKT1 phosphorylation and activation. Phosphorylation at Thr-2173 in the ATP-binding region by AKT1 strongly reduces kinase activity. In terms of processing, ubiquitinated at Lys-2066 by the SCF(FBXO22) complex via 'Lys-27'-linked ubiquitination prevents mTORC1 substrate recruitment.

It is found in the lysosome membrane. Its subcellular location is the endoplasmic reticulum membrane. It localises to the golgi apparatus membrane. The protein localises to the cell membrane. The protein resides in the mitochondrion outer membrane. It is found in the cytoplasm. Its subcellular location is the nucleus. It localises to the PML body. The protein localises to the microsome membrane. The protein resides in the cytoplasmic vesicle. It is found in the phagosome. The catalysed reaction is L-seryl-[protein] + ATP = O-phospho-L-seryl-[protein] + ADP + H(+). The enzyme catalyses L-threonyl-[protein] + ATP = O-phospho-L-threonyl-[protein] + ADP + H(+). It carries out the reaction L-tyrosyl-[protein] + ATP = O-phospho-L-tyrosyl-[protein] + ADP + H(+). With respect to regulation, the mTORC1 complex is activated in response to nutrients, growth factors or amino acids: activation requires relocalization of the mTORC1 complex to lysosomes that is mediated by the Ragulator complex, SLC38A9, and the Rag GTPases RagA/RRAGA, RagB/RRAGB, RagC/RRAGC and RagD/RRAGD. Activation of mTORC1 by growth factors such as insulin involves AKT1-mediated phosphorylation of TSC1-TSC2, which leads to the activation of the RHEB GTPase a potent activator of the protein kinase activity of mTORC1. Insulin-stimulated and amino acid-dependent phosphorylation at Ser-1261 promotes autophosphorylation and the activation of mTORC1. On the other hand, low cellular energy levels can inhibit mTORC1 through activation of PRKAA1 while hypoxia inhibits mTORC1 through a REDD1-dependent mechanism which may also require PRKAA1. The kinase activity of MTOR within the mTORC1 complex is positively regulated by MLST8. The kinase activity of MTOR is inhibited by DEPTOR and AKT1S1. The non-canonical mTORC1 complex is independent of the RHEB GTPase and specifically mediates phosphorylation of MiT/TFE factors TFEB and TFE3 but not other mTORC1 substrates: it is activated by FLCN, which activates Rag GTPases RagC/RRAGC and RagD/RRAGD. MTOR is the target of the immunosuppressive and anti-cancer drug rapamycin which acts in complex with FKBP1A/FKBP12, and specifically inhibits its kinase activity. mTORC2 is also activated by growth factors, but seems to be nutrient-insensitive. mTORC2 associates and is directly activated by ribosomes. mTORC2 may also be regulated by RHEB but in an indirect manner through the PI3K signaling pathway. Serine/threonine protein kinase which is a central regulator of cellular metabolism, growth and survival in response to hormones, growth factors, nutrients, energy and stress signals. MTOR directly or indirectly regulates the phosphorylation of at least 800 proteins. Functions as part of 2 structurally and functionally distinct signaling complexes mTORC1 and mTORC2 (mTOR complex 1 and 2). In response to nutrients, growth factors or amino acids, mTORC1 is recruited to the lysosome membrane and promotes protein, lipid and nucleotide synthesis by phosphorylating key regulators of mRNA translation and ribosome synthesis. This includes phosphorylation of EIF4EBP1 and release of its inhibition toward the elongation initiation factor 4E (eiF4E). Moreover, phosphorylates and activates RPS6KB1 and RPS6KB2 that promote protein synthesis by modulating the activity of their downstream targets including ribosomal protein S6, eukaryotic translation initiation factor EIF4B, and the inhibitor of translation initiation PDCD4. Stimulates the pyrimidine biosynthesis pathway, both by acute regulation through RPS6KB1-mediated phosphorylation of the biosynthetic enzyme CAD, and delayed regulation, through transcriptional enhancement of the pentose phosphate pathway which produces 5-phosphoribosyl-1-pyrophosphate (PRPP), an allosteric activator of CAD at a later step in synthesis, this function is dependent on the mTORC1 complex. Regulates ribosome synthesis by activating RNA polymerase III-dependent transcription through phosphorylation and inhibition of MAF1 an RNA polymerase III-repressor. Activates dormant ribosomes by mediating phosphorylation of SERBP1, leading to SERBP1 inactivation and reactivation of translation. In parallel to protein synthesis, also regulates lipid synthesis through SREBF1/SREBP1 and LPIN1. To maintain energy homeostasis mTORC1 may also regulate mitochondrial biogenesis through regulation of PPARGC1A. In the same time, mTORC1 inhibits catabolic pathways: negatively regulates autophagy through phosphorylation of ULK1. Under nutrient sufficiency, phosphorylates ULK1 at 'Ser-758', disrupting the interaction with AMPK and preventing activation of ULK1. Also prevents autophagy through phosphorylation of the autophagy inhibitor DAP. Also prevents autophagy by phosphorylating RUBCNL/Pacer under nutrient-rich conditions. Prevents autophagy by mediating phosphorylation of AMBRA1, thereby inhibiting AMBRA1 ability to mediate ubiquitination of ULK1 and interaction between AMBRA1 and PPP2CA. mTORC1 exerts a feedback control on upstream growth factor signaling that includes phosphorylation and activation of GRB10 a INSR-dependent signaling suppressor. Among other potential targets mTORC1 may phosphorylate CLIP1 and regulate microtubules. The mTORC1 complex is inhibited in response to starvation and amino acid depletion. The non-canonical mTORC1 complex, which acts independently of RHEB, specifically mediates phosphorylation of MiT/TFE factors TFEB and TFE3 in the presence of nutrients, promoting their cytosolic retention and inactivation. Upon starvation or lysosomal stress, inhibition of mTORC1 induces dephosphorylation and nuclear translocation of TFEB and TFE3, promoting their transcription factor activity. The mTORC1 complex regulates pyroptosis in macrophages by promoting GSDMD oligomerization. MTOR phosphorylates RPTOR which in turn inhibits mTORC1. As part of the mTORC2 complex, MTOR transduces signals from growth factors to pathways involved in proliferation, cytoskeletal organization, lipogenesis and anabolic output. In response to growth factors, mTORC2 phosphorylates and activates AGC protein kinase family members, including AKT (AKT1, AKT2 and AKT3), PKC (PRKCA, PRKCB and PRKCE) and SGK1. In contrast to mTORC1, mTORC2 is nutrient-insensitive. mTORC2 plays a critical role in AKT1 activation by mediating phosphorylation of different sites depending on the context, such as 'Thr-450', 'Ser-473', 'Ser-477' or 'Thr-479', facilitating the phosphorylation of the activation loop of AKT1 on 'Thr-308' by PDPK1/PDK1 which is a prerequisite for full activation. mTORC2 also regulates the phosphorylation of SGK1 at 'Ser-422'. mTORC2 may regulate the actin cytoskeleton, through phosphorylation of PRKCA, PXN and activation of the Rho-type guanine nucleotide exchange factors RHOA and RAC1A or RAC1B. The mTORC2 complex also phosphorylates various proteins involved in insulin signaling, such as FBXW8 and IGF2BP1. May also regulate insulin signaling by acting as a tyrosine protein kinase that catalyzes phosphorylation of IGF1R and INSR. Regulates osteoclastogenesis by adjusting the expression of CEBPB isoforms. Plays an important regulatory role in the circadian clock function; regulates period length and rhythm amplitude of the suprachiasmatic nucleus (SCN) and liver clocks. In Mus musculus (Mouse), this protein is Serine/threonine-protein kinase mTOR.